The primary structure comprises 628 residues: Forkhead box protein O (628 aa).

Disordered regions lie at residues Arg39–Gln77, Lys182–Lys205, Gly217–Pro269, Gln316–Tyr359, and Asn389–Val415. A Phosphothreonine; by PKB/AKT1 modification is found at Thr44. Over residues Thr63–Gln77 the composition is skewed to polar residues. Ser75 carries the phosphoserine modification. Positions Trp95–Gly201 form a DNA-binding region, fork-head. Ser190 bears the Phosphoserine; by PKB/AKT1 mark. 2 stretches are compositionally biased toward polar residues: residues Ala221 to Ser230 and Arg256 to Gly265. Position 259 is a phosphoserine; by PKB/AKT1 (Ser259). Ser262, Ser263, and Ser268 each carry phosphoserine. The span at Ser328–Pro337 shows a compositional bias: pro residues. Low complexity predominate over residues Pro338–Ala351. The segment covering Ser402–Asn414 has biased composition (polar residues).

Interacts with melt.

It localises to the cytoplasm. Its subcellular location is the nucleus. In terms of biological role, transcription factor involved in the regulation of the insulin signaling pathway. Consistently activates both the downstream target Thor\d4EBP and the feedback control target InR. Involved in negative regulation of the cell cycle, modulating cell growth and proliferation. In response to cellular stresses, such as nutrient deprivation or increased levels of reactive oxygen species, foxo is activated and inhibits growth through the action of target genes such as Thor. Foxo activated in the adult fat body can regulate lifespan in adults; an insulin peptide itself may function as one secondary messenger of insulin-regulated aging. Also regulates Lip4, homolog of human acid lipases, thereby acting as a key modulator of lipid metabolism by insulin signaling and integrates insulin responses to glucose and lipid homeostasis. This is Forkhead box protein O from Drosophila yakuba (Fruit fly).